Here is a 1058-residue protein sequence, read N- to C-terminus: Translation initiation factor IF-2 (1058 aa).

The segment covering 1–12 (MNDTKTPGDKTL) has biased composition (basic and acidic residues). Residues 1-468 (MNDTKTPGDK…MTGHRGMQES (468 aa)) are disordered. The segment covering 54–81 (APGEAGAPSGTPAAAPAATPAPAAAAPR) has biased composition (low complexity). The segment covering 82-95 (PATPAPAAPRPAAP) has biased composition (pro residues). Residues 96–108 (ATPAQPAAEAKAP) are compositionally biased toward low complexity. Pro residues predominate over residues 109 to 119 (APAPTPAPAAP). Composition is skewed to low complexity over residues 120 to 156 (AAPVAEAPKVEAPAPVAAKPEAAPAAPVAEAPKVEVP) and 164 to 228 (EPVA…QRPG). Positions 244 to 271 (RSGGPGSDRRGGPGGQNRPGQNRQGGSG) are enriched in gly residues. The span at 292–364 (ARVREVEERR…ARKRFGEETG (73 aa)) shows a compositional bias: basic and acidic residues. Positions 368–396 (GASAPSTSTARPLTPRPAGTTTTTGAPAA) are enriched in low complexity. The span at 452–461 (FRRRTQRMTG) shows a compositional bias: basic residues. Residues 555 to 725 (PRPPVVTIMG…SLQSEVLDLK (171 aa)) enclose the tr-type G domain. Residues 564–571 (GHVDHGKT) form a G1 region. Residue 564-571 (GHVDHGKT) coordinates GTP. Positions 589–593 (GITQH) are G2. The G3 stretch occupies residues 611–614 (DTPG). Residues 611-615 (DTPGH) and 665-668 (NKID) contribute to the GTP site. The G4 stretch occupies residues 665–668 (NKID). The tract at residues 701–703 (SAT) is G5.

The protein belongs to the TRAFAC class translation factor GTPase superfamily. Classic translation factor GTPase family. IF-2 subfamily.

The protein localises to the cytoplasm. Functionally, one of the essential components for the initiation of protein synthesis. Protects formylmethionyl-tRNA from spontaneous hydrolysis and promotes its binding to the 30S ribosomal subunits. Also involved in the hydrolysis of GTP during the formation of the 70S ribosomal complex. This Azorhizobium caulinodans (strain ATCC 43989 / DSM 5975 / JCM 20966 / LMG 6465 / NBRC 14845 / NCIMB 13405 / ORS 571) protein is Translation initiation factor IF-2.